The chain runs to 472 residues: Aspartyl/glutamyl-tRNA(Asn/Gln) amidotransferase subunit B (472 aa).

Belongs to the GatB/GatE family. GatB subfamily. Heterotrimer of A, B and C subunits.

It carries out the reaction L-glutamyl-tRNA(Gln) + L-glutamine + ATP + H2O = L-glutaminyl-tRNA(Gln) + L-glutamate + ADP + phosphate + H(+). The catalysed reaction is L-aspartyl-tRNA(Asn) + L-glutamine + ATP + H2O = L-asparaginyl-tRNA(Asn) + L-glutamate + ADP + phosphate + 2 H(+). Its function is as follows. Allows the formation of correctly charged Asn-tRNA(Asn) or Gln-tRNA(Gln) through the transamidation of misacylated Asp-tRNA(Asn) or Glu-tRNA(Gln) in organisms which lack either or both of asparaginyl-tRNA or glutaminyl-tRNA synthetases. The reaction takes place in the presence of glutamine and ATP through an activated phospho-Asp-tRNA(Asn) or phospho-Glu-tRNA(Gln). The protein is Aspartyl/glutamyl-tRNA(Asn/Gln) amidotransferase subunit B of Campylobacter jejuni subsp. jejuni serotype O:2 (strain ATCC 700819 / NCTC 11168).